Here is a 176-residue protein sequence, read N- to C-terminus: Adenine phosphoribosyltransferase (176 aa).

This sequence belongs to the purine/pyrimidine phosphoribosyltransferase family. In terms of assembly, homodimer.

It is found in the cytoplasm. It catalyses the reaction AMP + diphosphate = 5-phospho-alpha-D-ribose 1-diphosphate + adenine. Its pathway is purine metabolism; AMP biosynthesis via salvage pathway; AMP from adenine: step 1/1. Functionally, catalyzes a salvage reaction resulting in the formation of AMP, that is energically less costly than de novo synthesis. This chain is Adenine phosphoribosyltransferase, found in Gluconacetobacter diazotrophicus (strain ATCC 49037 / DSM 5601 / CCUG 37298 / CIP 103539 / LMG 7603 / PAl5).